The primary structure comprises 483 residues: NADPH:adrenodoxin oxidoreductase, mitochondrial (483 aa).

The transit peptide at 1-14 (MSRYLARYMVSRYF) directs the protein to the mitochondrion. Positions 32, 53, 61, and 97 each coordinate FAD. NADP(+) contacts are provided by residues 169-172 (QGNV), 213-214 (RR), and Glu225. Residues Trp391 and 398–400 (GII) each bind FAD. Gly398 is an NADP(+) binding site.

Belongs to the ferredoxin--NADP reductase type 1 family. It depends on FAD as a cofactor.

The protein resides in the mitochondrion. The catalysed reaction is 2 reduced [adrenodoxin] + NADP(+) + H(+) = 2 oxidized [adrenodoxin] + NADPH. In terms of biological role, associates in vitro with the adrenodoxin-like protein MFDX1 to form an efficient low potential electron transfer chain that is able to reduce cytochrome C. Functions as accessory mitochondrial protein involved with BIO2 in the plant biotin synthase reaction. The sequence is that of NADPH:adrenodoxin oxidoreductase, mitochondrial from Arabidopsis thaliana (Mouse-ear cress).